We begin with the raw amino-acid sequence, 157 residues long: UPF0179 protein Mhun_1135 (157 aa).

The protein belongs to the UPF0179 family.

The polypeptide is UPF0179 protein Mhun_1135 (Methanospirillum hungatei JF-1 (strain ATCC 27890 / DSM 864 / NBRC 100397 / JF-1)).